The primary structure comprises 394 residues: Acid ceramidase (394 aa).

An N-terminal signal peptide occupies residues 1-18; sequence MRGQSLLTWVLAAAVTCA. A disulfide bridge links cysteine 30 with cysteine 339. Cysteine 142 acts as the Nucleophile in catalysis. Residues asparagine 172, asparagine 194, asparagine 258, asparagine 341, and asparagine 347 are each glycosylated (N-linked (GlcNAc...) asparagine). Residues cysteine 387 and cysteine 391 are joined by a disulfide bond.

It belongs to the acid ceramidase family. As to quaternary structure, heterodimer; disulfide-linked. The heterodimer is composed of the disulfide-linked alpha and beta chains produced by autocatalytic cleavage of the precursor. N-glycosylated. Post-translationally, proteolytically cleaved into two chains alpha and beta that remain associated via a disulfide bond. Cleavage gives rise to a conformation change that activates the enzyme. The same catalytic Cys residue mediates the autoproteolytic cleavage and subsequent hydrolysis of lipid substrates. The beta chain may undergo an additional C-terminal processing. As to expression, widely expressed.

It localises to the lysosome. It is found in the secreted. It catalyses the reaction an N-acylsphing-4-enine + H2O = sphing-4-enine + a fatty acid. The catalysed reaction is N-dodecanoylsphing-4-enine + H2O = dodecanoate + sphing-4-enine. The enzyme catalyses N-(9Z-octadecenoyl)-sphing-4-enine + H2O = sphing-4-enine + (9Z)-octadecenoate. It carries out the reaction N-tetradecanoylsphing-4-enine + H2O = tetradecanoate + sphing-4-enine. It catalyses the reaction N-hexadecanoylsphing-4-enine + H2O = sphing-4-enine + hexadecanoate. The catalysed reaction is N-octadecanoylsphing-4-enine + H2O = sphing-4-enine + octadecanoate. The enzyme catalyses N-dodecanoyl-(4R)-hydroxysphinganine + H2O = (4R)-hydroxysphinganine + dodecanoate. It carries out the reaction N-(dodecanoyl)-sphinganine + H2O = dodecanoate + sphinganine. It catalyses the reaction N-(acetyl)-sphing-4-enine + H2O = sphing-4-enine + acetate. The catalysed reaction is N-(hexanoyl)sphing-4-enine + H2O = hexanoate + sphing-4-enine. The enzyme catalyses N-octanoylsphing-4-enine + H2O = octanoate + sphing-4-enine. It carries out the reaction N-dodecanoylethanolamine + H2O = dodecanoate + ethanolamine. It functions in the pathway lipid metabolism; sphingolipid metabolism. Its function is as follows. Lysosomal ceramidase that hydrolyzes sphingolipid ceramides into sphingosine and free fatty acids at acidic pH. Ceramides, sphingosine, and its phosphorylated form sphingosine-1-phosphate are bioactive lipids that mediate cellular signaling pathways regulating several biological processes including cell proliferation, apoptosis and differentiation. Has a higher catalytic efficiency towards C12-ceramides versus other ceramides. Also catalyzes the reverse reaction allowing the synthesis of ceramides from fatty acids and sphingosine. For the reverse synthetic reaction, the natural sphingosine D-erythro isomer is more efficiently utilized as a substrate compared to D-erythro-dihydrosphingosine and D-erythro-phytosphingosine, while the fatty acids with chain lengths of 12 or 14 carbons are the most efficiently used. Also has an N-acylethanolamine hydrolase activity. By regulating the levels of ceramides, sphingosine and sphingosine-1-phosphate in the epidermis, mediates the calcium-induced differentiation of epidermal keratinocytes. Also indirectly regulates tumor necrosis factor/TNF-induced apoptosis. By regulating the intracellular balance between ceramides and sphingosine, in adrenocortical cells, probably also acts as a regulator of steroidogenesis. This chain is Acid ceramidase, found in Mus musculus (Mouse).